Here is a 390-residue protein sequence, read N- to C-terminus: uncharacterized protein (390 aa).

11 helical membrane-spanning segments follow: residues 10 to 30 (LSFCVIFLLRMLGMFMILPIL), 43 to 63 (FLIGLSMGIYGISQVIFQIPF), 81 to 101 (FMFFIGNIISASIHSIWGLII), 134 to 154 (AIGVSFAISFLIAVVSGPIIV), 162 to 182 (IFWISAFLSIVCMIIVCFFVP), 213 to 233 (FYLGVFFLHFLLMIKFTMIPN), 246 to 266 (WKVYLGTILISFFVLFLFIFY), 272 to 292 (ILENIIEICILFILFSEIIFL), 298 to 318 (LLFLIISLQIFFISFNFLEVF), 341 to 361 (TSQFLGIFFGGVFSGWLYSFL), and 363 to 383 (FSQIFYFELFIILLWLIFSFF).

The protein belongs to the major facilitator superfamily.

The protein resides in the cell membrane. This is an uncharacterized protein from Buchnera aphidicola subsp. Acyrthosiphon pisum (strain APS) (Acyrthosiphon pisum symbiotic bacterium).